We begin with the raw amino-acid sequence, 129 residues long: UPF0102 protein CPS_4433 (129 aa).

The protein belongs to the UPF0102 family.

The sequence is that of UPF0102 protein CPS_4433 from Colwellia psychrerythraea (strain 34H / ATCC BAA-681) (Vibrio psychroerythus).